A 372-amino-acid chain; its full sequence is Peroxisomal biogenesis factor 3 (372 aa).

The Cytoplasmic segment spans residues 1–15 (MLRSMWNFLKRHKKK). The segment at 1 to 45 (MLRSMWNFLKRHKKKCIFLGTVLGGVYILGKYGQKKLREIQEREA) is targeting to peroxisomes. The helical transmembrane segment at 16 to 36 (CIFLGTVLGGVYILGKYGQKK) threads the bilayer. Over 37-116 (LREIQEREAA…LKIISFTRSI (80 aa)) the chain is Peroxisomal. A helical membrane pass occupies residues 117–140 (VAVYSTCMLVVLLRVQLNIIGGYI). The interaction with PEX19 stretch occupies residues 120-136 (YSTCMLVVLLRVQLNII). At 141–372 (YLDNATVGKN…AFSTPQQLEK (232 aa)) the chain is on the cytoplasmic side.

The protein belongs to the peroxin-3 family. Interacts with PEX19.

The protein localises to the peroxisome membrane. In terms of biological role, involved in peroxisome biosynthesis and integrity. Assembles membrane vesicles before the matrix proteins are translocated. As a docking factor for PEX19, is necessary for the import of peroxisomal membrane proteins in the peroxisomes. This Rattus norvegicus (Rat) protein is Peroxisomal biogenesis factor 3 (Pex3).